We begin with the raw amino-acid sequence, 335 residues long: Ferrochelatase (335 aa).

Residues histidine 207 and glutamate 288 each coordinate Fe cation.

Belongs to the ferrochelatase family.

It localises to the cytoplasm. The enzyme catalyses heme b + 2 H(+) = protoporphyrin IX + Fe(2+). It functions in the pathway porphyrin-containing compound metabolism; protoheme biosynthesis; protoheme from protoporphyrin-IX: step 1/1. Functionally, catalyzes the ferrous insertion into protoporphyrin IX. The sequence is that of Ferrochelatase from Helicobacter pylori (strain HPAG1).